The primary structure comprises 198 residues: Peptidyl-tRNA hydrolase (198 aa).

Tyrosine 14 is a tRNA binding site. Histidine 19 functions as the Proton acceptor in the catalytic mechanism. The tRNA site is built by tyrosine 64, asparagine 66, and asparagine 113.

This sequence belongs to the PTH family. As to quaternary structure, monomer.

The protein localises to the cytoplasm. It catalyses the reaction an N-acyl-L-alpha-aminoacyl-tRNA + H2O = an N-acyl-L-amino acid + a tRNA + H(+). In terms of biological role, hydrolyzes ribosome-free peptidyl-tRNAs (with 1 or more amino acids incorporated), which drop off the ribosome during protein synthesis, or as a result of ribosome stalling. Functionally, catalyzes the release of premature peptidyl moieties from peptidyl-tRNA molecules trapped in stalled 50S ribosomal subunits, and thus maintains levels of free tRNAs and 50S ribosomes. The protein is Peptidyl-tRNA hydrolase of Acidobacterium capsulatum (strain ATCC 51196 / DSM 11244 / BCRC 80197 / JCM 7670 / NBRC 15755 / NCIMB 13165 / 161).